The chain runs to 131 residues: Putative protein PTGES3L (131 aa).

The 89-residue stretch at 3–91 (RQPARTLWYD…KEKVAWPRLT (89 aa)) folds into the CS domain.

The protein belongs to the p23/wos2 family.

The protein is Putative protein PTGES3L (Ptges3l) of Mus musculus (Mouse).